A 316-amino-acid chain; its full sequence is Succinoglycan biosynthesis protein ExoV (316 aa).

Its pathway is glycan metabolism; exopolysaccharide biosynthesis. The sequence is that of Succinoglycan biosynthesis protein ExoV (exoV) from Rhizobium meliloti (strain 1021) (Ensifer meliloti).